A 197-amino-acid chain; its full sequence is Nascent polypeptide-associated complex subunit alpha (197 aa).

A compositionally biased stretch (acidic residues) spans 1–20 (MAEPVEDSVDEISSEGDSDV). 2 disordered regions span residues 1–46 (MAEP…RKLL) and 120–154 (GADRGTDSSAAAHASGHDHAHDHDHSHGDCASKAD). An NAC-A/B domain is found at 36–101 (DKNERKSRKL…AKVEDMSQNS (66 aa)). Positions 134–154 (SGHDHAHDHDHSHGDCASKAD) are enriched in basic and acidic residues. Residues 158–195 (VNQSDIDLVVSQVGCTREQAVEALIKNKGDIVETIMQL) form the UBA domain.

The protein belongs to the NAC-alpha family.

In terms of biological role, may promote appropriate targeting of ribosome-nascent polypeptide complexes. The sequence is that of Nascent polypeptide-associated complex subunit alpha from Babesia divergens.